The following is a 395-amino-acid chain: 1-deoxy-D-xylulose 5-phosphate reductoisomerase (395 aa).

Residues Thr-10, Gly-11, Ser-12, Ile-13, Asn-38, and Asn-123 each contribute to the NADPH site. Lys-124 serves as a coordination point for 1-deoxy-D-xylulose 5-phosphate. An NADPH-binding site is contributed by Glu-125. Asp-149 lines the Mn(2+) pocket. Positions 150, 151, 185, and 208 each coordinate 1-deoxy-D-xylulose 5-phosphate. Glu-151 lines the Mn(2+) pocket. Position 214 (Gly-214) interacts with NADPH. Residues Ser-221, Asn-226, Lys-227, and Glu-230 each contribute to the 1-deoxy-D-xylulose 5-phosphate site. Mn(2+) is bound at residue Glu-230.

Belongs to the DXR family. It depends on Mg(2+) as a cofactor. Mn(2+) is required as a cofactor.

The enzyme catalyses 2-C-methyl-D-erythritol 4-phosphate + NADP(+) = 1-deoxy-D-xylulose 5-phosphate + NADPH + H(+). Its pathway is isoprenoid biosynthesis; isopentenyl diphosphate biosynthesis via DXP pathway; isopentenyl diphosphate from 1-deoxy-D-xylulose 5-phosphate: step 1/6. Its function is as follows. Catalyzes the NADPH-dependent rearrangement and reduction of 1-deoxy-D-xylulose-5-phosphate (DXP) to 2-C-methyl-D-erythritol 4-phosphate (MEP). This Shewanella woodyi (strain ATCC 51908 / MS32) protein is 1-deoxy-D-xylulose 5-phosphate reductoisomerase.